Consider the following 231-residue polypeptide: Large ribosomal subunit protein uL1 (231 aa).

The protein belongs to the universal ribosomal protein uL1 family. Part of the 50S ribosomal subunit.

In terms of biological role, binds directly to 23S rRNA. The L1 stalk is quite mobile in the ribosome, and is involved in E site tRNA release. Functionally, protein L1 is also a translational repressor protein, it controls the translation of the L11 operon by binding to its mRNA. This chain is Large ribosomal subunit protein uL1, found in Dechloromonas aromatica (strain RCB).